Reading from the N-terminus, the 663-residue chain is Zyxin (663 aa).

The interval 35–438 (PPKPKINPFK…QQDQTLGSQG (404 aa)) is disordered. Composition is skewed to pro residues over residues 122–148 (FPPP…PPPL) and 160–211 (VPVP…PPSV). The segment covering 298–314 (PQKTTEPPAEASQSSPK) has biased composition (polar residues). 2 stretches are compositionally biased toward basic and acidic residues: residues 342 to 353 (QRERPRVLEKPR) and 360 to 375 (EPEH…ERTR). 2 stretches are compositionally biased toward polar residues: residues 377-393 (LGPQ…QSTG) and 427-438 (TGQQDQTLGSQG). 3 LIM zinc-binding domains span residues 470–531 (ELCG…TLEC), 532–589 (CAVC…RRYA), and 590–660 (PRCC…RARA).

It belongs to the zyxin/ajuba family. Interacts (via LIM2 domain) with hesx1/anf1. At the early gastrula stage, expressed at a low level in the animal hemisphere. Expression rises by the end of gastrulation in the anterior part of the embryo, where it gradually increases by the midneurula stage. During neurulation, expression continues most intensively in the anterior part of the neural plate and around it. At later stages, intensely expressed in the brain and at lower levels in the spinal cord, eyes, nasal placodes, within somites, and around the cement gland.

The protein resides in the cytoplasm. Its subcellular location is the cytoskeleton. The protein localises to the cell junction. It is found in the focal adhesion. Functionally, adhesion plaque protein. May be a component of a signal transduction pathway that mediates adhesion-stimulated changes in gene expression. Suppresses the transcription-repressing activity of hesx1/anf1. This chain is Zyxin, found in Xenopus laevis (African clawed frog).